We begin with the raw amino-acid sequence, 402 residues long: MLQDRVSGSLSSSKISRCVLFLSLFCFFLLTMHASANRLQRVPNPGPSPAPEPKPCPSPGPNPAPATTKRTHNTTFPAIFAFGDSILDTGNNDYILTLIKANFLPYGMNFPDKVPTGRFCNGKIPSDFIADYIGVKPVVPAYLRPGLTQEDLLTGVSFASGGSGYDPLTPIVVSAIPMSKQLTYFQEYIEKVKGFVGKEKAEHIISKGLAIVVAGSDDLANTYYGEHLEEFLYDIDTYTSFMASSAASFAMQLYESGAKKIGFIGVSPIGCIPIQRTTRGGLKRKCADELNFAAQLFNSKLSTSLNELAKTMKNTTLVYIDIYSSFNDMIQNPKKYGFDEIDRGCCGTGLLELGPLCNKYTSLLCKNVSSFMFWDSYHPTERAYKILSQKFVENDMGPFYDN.

Residues Met-1–Ser-35 form the signal peptide. Residues Arg-41–Lys-69 are disordered. Residues Asn-44–Ala-64 are compositionally biased toward pro residues. A glycan (N-linked (GlcNAc...) asparagine) is linked at Asn-73. Residue Ser-85 is the Nucleophile of the active site. N-linked (GlcNAc...) asparagine glycosylation is found at Asn-314 and Asn-367. Active-site residues include Asp-375 and His-378.

Belongs to the 'GDSL' lipolytic enzyme family.

The protein localises to the secreted. The sequence is that of GDSL esterase/lipase At1g20120 from Arabidopsis thaliana (Mouse-ear cress).